A 175-amino-acid polypeptide reads, in one-letter code: NADH-ubiquinone oxidoreductase chain 6 (175 aa).

Transmembrane regions (helical) follow at residues Met-1–Ser-21, Ser-25–Leu-45, Phe-47–Val-67, Ala-88–Leu-108, and Tyr-149–Met-169.

Belongs to the complex I subunit 6 family. Core subunit of respiratory chain NADH dehydrogenase (Complex I) which is composed of 45 different subunits.

Its subcellular location is the mitochondrion inner membrane. The enzyme catalyses a ubiquinone + NADH + 5 H(+)(in) = a ubiquinol + NAD(+) + 4 H(+)(out). Functionally, core subunit of the mitochondrial membrane respiratory chain NADH dehydrogenase (Complex I) which catalyzes electron transfer from NADH through the respiratory chain, using ubiquinone as an electron acceptor. Essential for the catalytic activity and assembly of complex I. This is NADH-ubiquinone oxidoreductase chain 6 (MT-ND6) from Bos indicus (Zebu).